A 151-amino-acid chain; its full sequence is Chemokine-like factor (151 aa).

The region spanning 13 to 133 is the MARVEL domain; the sequence is FCLSLKCFVK…DCALMCQKLR (121 aa). A run of 4 helical transmembrane segments spans residues 19–39, 45–65, 74–94, and 107–127; these read CFVK…FIVA, YIVI…LYMC, FFWP…MLIV, and IMVG…DCAL. An N-linked (GlcNAc...) asparagine glycan is attached at N142.

It belongs to the chemokine-like factor family. Both isoforms have highest expression levels in testis with relatively lower expression level in liver, spleen, lung, brain and heart and barely detectable levels in skeletal muscle and kidney were barely detected. In most tissues, isoform CKLF2 has higher expression levels than isoform CKLF1.

It is found in the secreted. It localises to the membrane. May play an important role in inflammation and regeneration of skeletal muscle. Essential for embryonic development. Its function is as follows. Has chemotactic response in monocytes, neutrophils and lymphocytes. Binds CCR4. In Rattus norvegicus (Rat), this protein is Chemokine-like factor (Cklf).